A 494-amino-acid polypeptide reads, in one-letter code: GTPase Der (494 aa).

2 EngA-type G domains span residues 3-166 and 206-379; these read PVVA…AEQM and IKLA…RSAT. GTP is bound by residues 9 to 16, 56 to 60, 118 to 121, 212 to 219, 259 to 263, and 324 to 327; these read GRPNVGKS, DTGGI, NKVD, DTAGV, and NKWD. Residues 380–464 form the KH-like domain; the sequence is TRVGTSVLTR…PIRIQFQNSE (85 aa).

It belongs to the TRAFAC class TrmE-Era-EngA-EngB-Septin-like GTPase superfamily. EngA (Der) GTPase family. In terms of assembly, associates with the 50S ribosomal subunit.

Functionally, GTPase that plays an essential role in the late steps of ribosome biogenesis. This is GTPase Der from Vibrio cholerae serotype O1 (strain ATCC 39541 / Classical Ogawa 395 / O395).